Consider the following 216-residue polypeptide: Glycerol-3-phosphate acyltransferase (216 aa).

5 helical membrane passes run 5–25 (LIAL…FGLV), 70–90 (IAAA…AGAF), 118–138 (VVFW…AAIF), 140–160 (ISSL…LAWG), and 164–184 (VAIM…ANIS). Basic and acidic residues predominate over residues 192-201 (PRIGGKKSET). The disordered stretch occupies residues 192 to 216 (PRIGGKKSETSADVSDGDDPDTPAT). Positions 206–216 (SDGDDPDTPAT) are enriched in acidic residues.

Belongs to the PlsY family. Probably interacts with PlsX.

Its subcellular location is the cell inner membrane. The enzyme catalyses an acyl phosphate + sn-glycerol 3-phosphate = a 1-acyl-sn-glycero-3-phosphate + phosphate. It participates in lipid metabolism; phospholipid metabolism. In terms of biological role, catalyzes the transfer of an acyl group from acyl-phosphate (acyl-PO(4)) to glycerol-3-phosphate (G3P) to form lysophosphatidic acid (LPA). This enzyme utilizes acyl-phosphate as fatty acyl donor, but not acyl-CoA or acyl-ACP. The polypeptide is Glycerol-3-phosphate acyltransferase (Maricaulis maris (strain MCS10) (Caulobacter maris)).